Here is a 146-residue protein sequence, read N- to C-terminus: Large ribosomal subunit protein bL19 (146 aa).

This sequence belongs to the bacterial ribosomal protein bL19 family.

Its function is as follows. This protein is located at the 30S-50S ribosomal subunit interface and may play a role in the structure and function of the aminoacyl-tRNA binding site. The chain is Large ribosomal subunit protein bL19 from Bartonella bacilliformis (strain ATCC 35685 / KC583 / Herrer 020/F12,63).